The chain runs to 156 residues: Arginine repressor (156 aa).

This sequence belongs to the ArgR family.

It is found in the cytoplasm. It functions in the pathway amino-acid biosynthesis; L-arginine biosynthesis [regulation]. In terms of biological role, regulates arginine biosynthesis genes. This chain is Arginine repressor, found in Shewanella oneidensis (strain ATCC 700550 / JCM 31522 / CIP 106686 / LMG 19005 / NCIMB 14063 / MR-1).